The following is a 179-amino-acid chain: Large ribosomal subunit protein uL5 (179 aa).

The protein belongs to the universal ribosomal protein uL5 family. Part of the 50S ribosomal subunit; part of the 5S rRNA/L5/L18/L25 subcomplex. Contacts the 5S rRNA and the P site tRNA. Forms a bridge to the 30S subunit in the 70S ribosome.

Its function is as follows. This is one of the proteins that bind and probably mediate the attachment of the 5S RNA into the large ribosomal subunit, where it forms part of the central protuberance. In the 70S ribosome it contacts protein S13 of the 30S subunit (bridge B1b), connecting the 2 subunits; this bridge is implicated in subunit movement. Contacts the P site tRNA; the 5S rRNA and some of its associated proteins might help stabilize positioning of ribosome-bound tRNAs. This is Large ribosomal subunit protein uL5 from Buchnera aphidicola subsp. Acyrthosiphon kondoi (Acyrthosiphon kondoi symbiotic bacterium).